The primary structure comprises 305 residues: Protoheme IX farnesyltransferase (305 aa).

The next 9 helical transmembrane spans lie at 31–51 (VMSLVIFTGFVGMWLAPYSVH), 52–72 (PFIAGIAVVCIALGAGSAGAI), 96–118 (VIESDEALSFGLITGFFAVFFMA), 123–145 (LLASFLLLFTIFYYICIYTIWLK), 151–171 (NIVIGGVSGALPPVIGYAAVS), 179–199 (IILFLIIFIWTPPHSWALALF), 225–245 (ILIYSILLFIVSLMPFFIGMN), 247–267 (FIYLIISGILGVVFLYYAGSL), and 281–301 (FAYSIFYLFFIFLLLYSTNTI).

It belongs to the UbiA prenyltransferase family. Protoheme IX farnesyltransferase subfamily.

The protein localises to the cell membrane. The enzyme catalyses heme b + (2E,6E)-farnesyl diphosphate + H2O = Fe(II)-heme o + diphosphate. The protein operates within porphyrin-containing compound metabolism; heme O biosynthesis; heme O from protoheme: step 1/1. In terms of biological role, converts heme B (protoheme IX) to heme O by substitution of the vinyl group on carbon 2 of heme B porphyrin ring with a hydroxyethyl farnesyl side group. The polypeptide is Protoheme IX farnesyltransferase (Rickettsia africae (strain ESF-5)).